Here is a 328-residue protein sequence, read N- to C-terminus: Tetraacyldisaccharide 4'-kinase (328 aa).

55–62 (TAGGNGKT) is a binding site for ATP.

The protein belongs to the LpxK family.

The catalysed reaction is a lipid A disaccharide + ATP = a lipid IVA + ADP + H(+). It functions in the pathway glycolipid biosynthesis; lipid IV(A) biosynthesis; lipid IV(A) from (3R)-3-hydroxytetradecanoyl-[acyl-carrier-protein] and UDP-N-acetyl-alpha-D-glucosamine: step 6/6. Its function is as follows. Transfers the gamma-phosphate of ATP to the 4'-position of a tetraacyldisaccharide 1-phosphate intermediate (termed DS-1-P) to form tetraacyldisaccharide 1,4'-bis-phosphate (lipid IVA). The sequence is that of Tetraacyldisaccharide 4'-kinase from Escherichia coli O45:K1 (strain S88 / ExPEC).